The chain runs to 475 residues: Ribulose bisphosphate carboxylase large chain (475 aa).

Positions 1-2 (MV) are excised as a propeptide. Proline 3 carries the post-translational modification N-acetylproline. N6,N6,N6-trimethyllysine is present on lysine 14. Positions 123 and 173 each coordinate substrate. The active-site Proton acceptor is lysine 175. Lysine 177 serves as a coordination point for substrate. Lysine 201, aspartate 203, and glutamate 204 together coordinate Mg(2+). Lysine 201 carries the N6-carboxylysine modification. Histidine 294 serves as the catalytic Proton acceptor. Residues arginine 295, histidine 327, and serine 379 each contribute to the substrate site.

Belongs to the RuBisCO large chain family. Type I subfamily. Heterohexadecamer of 8 large chains and 8 small chains. Requires Mg(2+) as cofactor.

The protein resides in the plastid. The protein localises to the chloroplast. The catalysed reaction is 2 (2R)-3-phosphoglycerate + 2 H(+) = D-ribulose 1,5-bisphosphate + CO2 + H2O. It catalyses the reaction D-ribulose 1,5-bisphosphate + O2 = 2-phosphoglycolate + (2R)-3-phosphoglycerate + 2 H(+). RuBisCO catalyzes two reactions: the carboxylation of D-ribulose 1,5-bisphosphate, the primary event in carbon dioxide fixation, as well as the oxidative fragmentation of the pentose substrate in the photorespiration process. Both reactions occur simultaneously and in competition at the same active site. This chain is Ribulose bisphosphate carboxylase large chain, found in Dunaliella tertiolecta (Green alga).